The sequence spans 677 residues: Envelope glycoprotein (677 aa).

Residues 1–33 (MGSGYQLLQLPRERFRKTSFLVWVIILFQRAIS) form the signal peptide. The Extracellular portion of the chain corresponds to 34–651 (MPLGIVTNST…DLNLWTGWRQ (618 aa)). The N-linked (GlcNAc...) asparagine; by host glycan is linked to Asn41. Cystine bridges form between Cys54–Cys610, Cys109–Cys136, Cys122–Cys148, Cys512–Cys557, and Cys602–Cys609. The tract at residues 55 to 202 (RDKLSSTSQL…HFWKATPAHE (148 aa)) is receptor-binding. Residues Asn205, Asn239, Asn258, Asn269, Asn297, Asn317, Asn318, Asn339, Asn406, Asn420, Asn435, and Asn463 are each glycosylated (N-linked (GlcNAc...) asparagine; by host). The mucin-like region stretch occupies residues 306-486 (NLHFQILSTH…PSQPGLTINT (181 aa)). Over residues 315–326 (HTNNSSDQSPAG) the composition is skewed to polar residues. Disordered regions lie at residues 315–349 (HTNN…TDSP), 370–483 (NGET…PGLT), and 489–508 (KVAD…RQNT). Polar residues-rich tracts occupy residues 370–421 (NGET…ASNE), 428–445 (MNSI…QTKA), and 458–472 (PQET…TSPG). The interval 525–540 (GAAAGLAWIPYFGPAA) is fusion peptide. Residues 555–596 (LICGLRQLANETTQALQLFLRATTELRTYSLLNRKAIDFLLQ) adopt a coiled-coil conformation. Residue Asn564 is glycosylated (N-linked (GlcNAc...) asparagine; by host). The stretch at 616-635 (WTKNITDEINQIKHDFIDNP) forms a coiled coil. Residue Asn619 is glycosylated (N-linked (GlcNAc...) asparagine; by host). A helical transmembrane segment spans residues 652–672 (WIPAGIGIIGVIIAIIALLCI). S-palmitoyl cysteine; by host attachment occurs at residues Cys671 and Cys673. Residues 673 to 677 (CKILC) lie on the Cytoplasmic side of the membrane.

This sequence belongs to the filoviruses glycoprotein family. As to quaternary structure, homotrimer; each monomer consists of a GP1 and a GP2 subunit linked by disulfide bonds. The resulting peplomers (GP1,2) protrude from the virus surface as spikes. Interacts with host integrin alpha-V/ITGAV. Interacts with host CLEC10A. Binds also to host CD209 and CLEC4M/DC-SIGN(R). Interacts with host FOLR1. Interacts with BST2; this interaction inhibits the antiviral effect of BST2 and this allows viral release from infected cells. Interacts with host FCN1; this interaction enhances viral entry. Interacts with host TLR4; this interaction induces cell death in T-lymphocytes or proinflammatory cytokines and SOCS1 production in monocytes. In terms of assembly, interacts with host entry receptor NPC1. GP1 and GP2delta are part of GP1,2delta soluble complexes released by ectodomain shedding. In terms of processing, the signal peptide region modulates GP's high mannose glycosylation, thereby determining the efficiency of the interactions with DC-SIGN(R). N-glycosylated. Post-translationally, O-glycosylated in the mucin-like region. In terms of processing, palmitoylation of GP2 is not required for its function. Specific enzymatic cleavages in vivo yield mature proteins. The precursor is processed into GP1 and GP2 by host cell furin in the trans Golgi, and maybe by other host proteases, to yield the mature GP1 and GP2 proteins. The cleavage site corresponds to the furin optimal cleavage sequence [KR]-X-[KR]-R. This cleavage does not seem to be required for function. After the internalization of the virus into cell endosomes, GP1 C-terminus is removed by the endosomal proteases cathepsin B, cathepsin L, or both, leaving a 19-kDa N-terminal fragment which is further digested by cathepsin B. Proteolytic processing of GP1,2 by host ADAM17 can remove the transmembrane anchor of GP2 and leads to shedding of complexes consisting in GP1 and truncated GP2 (GP1,2delta).

The protein localises to the virion membrane. It is found in the host cell membrane. Its subcellular location is the secreted. In terms of biological role, trimeric GP1,2 complexes form the virion surface spikes and mediate the viral entry processes, with GP1 acting as the receptor-binding subunit and GP2 as the membrane fusion subunit. At later times of infection, down-regulates the expression of various host cell surface molecules that are essential for immune surveillance and cell adhesion. Down-modulates several integrins including ITGA1, ITGA2, ITGA3, ITGA4, ITGA5, ITGA6, ITGAV and ITGB1. This decrease in cell adhesion molecules may lead to cell detachment, contributing to the disruption of blood vessel integrity and hemorrhages developed during infection (cytotoxicity). Interacts with host TLR4 and thereby stimulates the differentiation and activation of monocytes leading to bystander death of T-lymphocytes. Down-regulates as well the function of host natural killer cells. Counteracts the antiviral effect of host BST2/tetherin that restricts release of progeny virions from infected cells. However, cooperates with VP40 and host BST2 to activate canonical NF-kappa-B pathway in a manner dependent on neddylation. Its function is as follows. Functions as a decoy for anti-GP1,2 antibodies thereby contributing to viral immune evasion. Interacts and activates host macrophages and dendritic cells inducing up-regulation of cytokine transcription. This effect is mediated throught activation of host TLR4. Functionally, responsible for binding to the receptor(s) on target cells. Interacts with CD209/DC-SIGN and CLEC4M/DC-SIGNR which act as cofactors for virus entry into dendritic cells (DCs) and endothelial cells. Binding to the macrophage specific lectin CLEC10A also seems to enhance virus infectivity. Interaction with FOLR1/folate receptor alpha may be a cofactor for virus entry in some cell types, although results are contradictory. Members of the Tyro3 receptor tyrosine kinase family also seem to be cell entry factors in filovirus infection. Once attached, the virions are internalized through clathrin-dependent endocytosis and/or macropinocytosis. After internalization of the virus into the endosomes of the host cell, proteolysis of GP1 by two cysteine proteases, CTSB/cathepsin B and CTSL/cathepsin L removes the glycan cap and allows GP1 binding to the host entry receptor NPC1. NPC1-binding, Ca(2+) and acidic pH induce a conformational change of GP2, which unmasks its fusion peptide and permit membranes fusion. Acts as a class I viral fusion protein. Under the current model, the protein has at least 3 conformational states: pre-fusion native state, pre-hairpin intermediate state, and post-fusion hairpin state. During viral and target cell membrane fusion, the coiled coil regions (heptad repeats) assume a trimer-of-hairpins structure, positioning the fusion peptide in close proximity to the C-terminal region of the ectodomain. The formation of this structure appears to drive apposition and subsequent fusion of viral and target cell membranes. Responsible for penetration of the virus into the cell cytoplasm by mediating the fusion of the membrane of the endocytosed virus particle with the endosomal membrane. Low pH in endosomes induces an irreversible conformational change in GP2, releasing the fusion hydrophobic peptide. This is Envelope glycoprotein (GP) from Reston ebolavirus (strain Philippines-96) (REBOV).